The sequence spans 470 residues: Cysteine--tRNA ligase (470 aa).

Cys-27 contributes to the Zn(2+) binding site. The 'HIGH' region motif lies at 29–39 (PTVYNFFHIGN). Cys-211, His-236, and Glu-240 together coordinate Zn(2+). The 'KMSKS' region signature appears at 268 to 272 (KMSKS). Lys-271 lines the ATP pocket.

The protein belongs to the class-I aminoacyl-tRNA synthetase family. As to quaternary structure, monomer. Zn(2+) serves as cofactor.

It localises to the cytoplasm. The catalysed reaction is tRNA(Cys) + L-cysteine + ATP = L-cysteinyl-tRNA(Cys) + AMP + diphosphate. The protein is Cysteine--tRNA ligase of Clostridium botulinum (strain Eklund 17B / Type B).